Reading from the N-terminus, the 241-residue chain is Large ribosomal subunit protein uL1 (241 aa).

This sequence belongs to the universal ribosomal protein uL1 family. In terms of assembly, part of the 50S ribosomal subunit.

Binds directly to 23S rRNA. The L1 stalk is quite mobile in the ribosome, and is involved in E site tRNA release. In terms of biological role, protein L1 is also a translational repressor protein, it controls the translation of the L11 operon by binding to its mRNA. The chain is Large ribosomal subunit protein uL1 from Thermomicrobium roseum (strain ATCC 27502 / DSM 5159 / P-2).